Consider the following 175-residue polypeptide: Urease accessory protein UreE (175 aa).

A disordered region spans residues 134 to 175; that stretch reads FQPESGAYGGGHHHGDESATDLHNPGHGPHRSVPKIHEFKPR.

Belongs to the UreE family.

The protein resides in the cytoplasm. Involved in urease metallocenter assembly. Binds nickel. Probably functions as a nickel donor during metallocenter assembly. The sequence is that of Urease accessory protein UreE from Dechloromonas aromatica (strain RCB).